Reading from the N-terminus, the 132-residue chain is Small ribosomal subunit protein uS8 (132 aa).

Belongs to the universal ribosomal protein uS8 family. Part of the 30S ribosomal subunit. Contacts proteins S5 and S12.

Its function is as follows. One of the primary rRNA binding proteins, it binds directly to 16S rRNA central domain where it helps coordinate assembly of the platform of the 30S subunit. In Mycobacterium leprae (strain Br4923), this protein is Small ribosomal subunit protein uS8.